We begin with the raw amino-acid sequence, 318 residues long: 4-hydroxy-3-methylbut-2-enyl diphosphate reductase (318 aa).

Residue C12 coordinates [4Fe-4S] cluster. (2E)-4-hydroxy-3-methylbut-2-enyl diphosphate contacts are provided by H41 and H74. Dimethylallyl diphosphate-binding residues include H41 and H74. Residues H41 and H74 each coordinate isopentenyl diphosphate. C96 is a [4Fe-4S] cluster binding site. Position 124 (H124) interacts with (2E)-4-hydroxy-3-methylbut-2-enyl diphosphate. H124 contributes to the dimethylallyl diphosphate binding site. An isopentenyl diphosphate-binding site is contributed by H124. Residue E126 is the Proton donor of the active site. A (2E)-4-hydroxy-3-methylbut-2-enyl diphosphate-binding site is contributed by T167. C197 lines the [4Fe-4S] cluster pocket. The (2E)-4-hydroxy-3-methylbut-2-enyl diphosphate site is built by S225, S226, N227, and S269. The dimethylallyl diphosphate site is built by S225, S226, N227, and S269. Residues S225, S226, N227, and S269 each coordinate isopentenyl diphosphate.

It belongs to the IspH family. It depends on [4Fe-4S] cluster as a cofactor.

The enzyme catalyses isopentenyl diphosphate + 2 oxidized [2Fe-2S]-[ferredoxin] + H2O = (2E)-4-hydroxy-3-methylbut-2-enyl diphosphate + 2 reduced [2Fe-2S]-[ferredoxin] + 2 H(+). It catalyses the reaction dimethylallyl diphosphate + 2 oxidized [2Fe-2S]-[ferredoxin] + H2O = (2E)-4-hydroxy-3-methylbut-2-enyl diphosphate + 2 reduced [2Fe-2S]-[ferredoxin] + 2 H(+). It participates in isoprenoid biosynthesis; dimethylallyl diphosphate biosynthesis; dimethylallyl diphosphate from (2E)-4-hydroxy-3-methylbutenyl diphosphate: step 1/1. Its pathway is isoprenoid biosynthesis; isopentenyl diphosphate biosynthesis via DXP pathway; isopentenyl diphosphate from 1-deoxy-D-xylulose 5-phosphate: step 6/6. In terms of biological role, catalyzes the conversion of 1-hydroxy-2-methyl-2-(E)-butenyl 4-diphosphate (HMBPP) into a mixture of isopentenyl diphosphate (IPP) and dimethylallyl diphosphate (DMAPP). Acts in the terminal step of the DOXP/MEP pathway for isoprenoid precursor biosynthesis. In Francisella philomiragia subsp. philomiragia (strain ATCC 25017 / CCUG 19701 / FSC 153 / O#319-036), this protein is 4-hydroxy-3-methylbut-2-enyl diphosphate reductase.